We begin with the raw amino-acid sequence, 255 residues long: MWIGIISLFPEMFRAITDYGVTGRAVKNGLLSIQSWSPRDFTHDRHRTVDDRPYGGGPGMLMMVQPLRDAIHAAKAAAGEGAKVIYLSPQGRKLDQAGVSELATNQKLILVCGRYEGIDERVIQTEIDEEWSIGDYVLSGGELPAMTLIDSVSRFIPGVLGHEASATEDSFAEGLLDCPHYTRPEVLEGMEVPPVLLSGNHAEIRRWRLKQSLGRTWLRRPELLENLALTEEQARLLAEFKKEHAQQQHKHDGMA.

S-adenosyl-L-methionine is bound by residues Gly-113 and 133-138; that span reads IGDYVL.

This sequence belongs to the RNA methyltransferase TrmD family. Homodimer.

Its subcellular location is the cytoplasm. The catalysed reaction is guanosine(37) in tRNA + S-adenosyl-L-methionine = N(1)-methylguanosine(37) in tRNA + S-adenosyl-L-homocysteine + H(+). In terms of biological role, specifically methylates guanosine-37 in various tRNAs. The sequence is that of tRNA (guanine-N(1)-)-methyltransferase from Escherichia fergusonii (strain ATCC 35469 / DSM 13698 / CCUG 18766 / IAM 14443 / JCM 21226 / LMG 7866 / NBRC 102419 / NCTC 12128 / CDC 0568-73).